The following is a 547-amino-acid chain: uncharacterized protein (547 aa).

The Cytoplasmic segment spans residues 1-19 (MVRLNHAASYFMPIFCSTR). A helical membrane pass occupies residues 20–40 (PHIVILSALFSISLFSLFYAS). The Vacuolar segment spans residues 41-64 (SELLLHQYDDPLMFKPNSQDYFRT). A helical transmembrane segment spans residues 65 to 85 (FLLGLFSPFLYYFLKTFLFNI). Residues 86 to 89 (NQRF) lie on the Cytoplasmic side of the membrane. Residues 90–110 (LILNLIVDFPINDVFMLLILI) traverse the membrane as a helical segment. Residues 111 to 139 (GLAYPQVQDHEGGTIKHKECSWHIIPRQA) are Vacuolar-facing. A helical membrane pass occupies residues 140 to 160 (YIFGISWALGEFTICIIGNLF). Topologically, residues 161 to 340 (NYQEIADPNI…RFIAFSTAYQ (180 aa)) are cytoplasmic. A Phosphoserine modification is found at Ser-225. Residues 237 to 271 (PIKPLRSSSSTYGSIRQQPHENKKQLHVPDNSQDD) form a disordered region. The span at 242 to 253 (RSSSSTYGSIRQ) shows a compositional bias: polar residues. Residues 341 to 361 (LVTGLLLMILVVGSNIMLTIG) form a helical membrane-spanning segment. The Vacuolar portion of the chain corresponds to 362–394 (ESLILSMYFVYVRGHEGLFTPVVNYFGSRTISN). Residues 395 to 415 (FILCVIIPFISLNFLINTSIY) traverse the membrane as a helical segment. The Cytoplasmic portion of the chain corresponds to 416–523 (LRRELDDWFN…NWRALARNDS (108 aa)). Residues 524 to 544 (FVLGVMVSWSLLVFVTGILST) traverse the membrane as a helical segment. The Vacuolar portion of the chain corresponds to 545–547 (VYI).

Its subcellular location is the vacuole membrane. This is an uncharacterized protein from Saccharomyces cerevisiae (strain ATCC 204508 / S288c) (Baker's yeast).